We begin with the raw amino-acid sequence, 320 residues long: Lipoyl synthase (320 aa).

[4Fe-4S] cluster is bound by residues Cys56, Cys61, Cys67, Cys82, Cys86, Cys89, and Ser295. The region spanning Trp68–Ala284 is the Radical SAM core domain. The disordered stretch occupies residues Glu300 to Asp320. A compositionally biased stretch (low complexity) spans Ala303–Asp320.

The protein belongs to the radical SAM superfamily. Lipoyl synthase family. [4Fe-4S] cluster is required as a cofactor.

The protein resides in the cytoplasm. It catalyses the reaction [[Fe-S] cluster scaffold protein carrying a second [4Fe-4S](2+) cluster] + N(6)-octanoyl-L-lysyl-[protein] + 2 oxidized [2Fe-2S]-[ferredoxin] + 2 S-adenosyl-L-methionine + 4 H(+) = [[Fe-S] cluster scaffold protein] + N(6)-[(R)-dihydrolipoyl]-L-lysyl-[protein] + 4 Fe(3+) + 2 hydrogen sulfide + 2 5'-deoxyadenosine + 2 L-methionine + 2 reduced [2Fe-2S]-[ferredoxin]. It participates in protein modification; protein lipoylation via endogenous pathway; protein N(6)-(lipoyl)lysine from octanoyl-[acyl-carrier-protein]: step 2/2. Functionally, catalyzes the radical-mediated insertion of two sulfur atoms into the C-6 and C-8 positions of the octanoyl moiety bound to the lipoyl domains of lipoate-dependent enzymes, thereby converting the octanoylated domains into lipoylated derivatives. The polypeptide is Lipoyl synthase (Symbiobacterium thermophilum (strain DSM 24528 / JCM 14929 / IAM 14863 / T)).